The sequence spans 338 residues: L-asparaginase 1 (338 aa).

The Asparaginase/glutaminase domain occupies 4–329; that stretch reads KSIYVAYTGG…ETIRKAMSQN (326 aa). Thr14 functions as the O-isoaspartyl threonine intermediate in the catalytic mechanism. Substrate contacts are provided by residues 59 to 61 and 91 to 92; these read DSS and TD.

This sequence belongs to the asparaginase 1 family. In terms of assembly, homotetramer.

The protein resides in the cytoplasm. It carries out the reaction L-asparagine + H2O = L-aspartate + NH4(+). The polypeptide is L-asparaginase 1 (ansA) (Escherichia coli O157:H7).